The chain runs to 1115 residues: Iron-regulated protein FrpA (1115 aa).

Hemolysin-type calcium-binding repeat units lie at residues 755-772, 773-790, 901-918, 919-936, 937-954, 955-972, and 973-990; these read FGHN…NDTL, IGGA…SDTY, NGGL…NDLL, NGDA…NDTL, DGGE…NDAL, and NGGE…NDTL.

The protein belongs to the RTX prokaryotic toxin (TC 1.C.11) family.

Its subcellular location is the cell outer membrane. It localises to the secreted. In terms of biological role, may participate in the pathogenesis of meningococcal disease. The sequence is that of Iron-regulated protein FrpA (frpA) from Neisseria meningitidis serogroup C.